We begin with the raw amino-acid sequence, 265 residues long: uncharacterized protein (265 aa).

Glu-47 is a thiamine diphosphate binding site. Positions Gln-204–Thr-247 are thiamine pyrophosphate binding.

It belongs to the TPP enzyme family. Mg(2+) is required as a cofactor. It depends on thiamine diphosphate as a cofactor.

Its function is as follows. Truncated acetolactase synthase; no longer catalytically active. This is an uncharacterized protein from Haemophilus influenzae (strain ATCC 51907 / DSM 11121 / KW20 / Rd).